The sequence spans 189 residues: MTVHIHPAVDQGVKQGSGSFAGGTLVCKCQDRPVKVGIKGDVAHNHACGCTKCWKPDGATFSVVAVVPRDNVTVLENGDKLHVVDASATIQRHACKVCGTHMYGRIENKSHPFYGLDFIHPELFQEGGSAAPEFAAFVSSVIESGVDPSEMPGIRARLKELGLEPYDCLSPGLMDAIATSVAKSQQKAA.

One can recognise a CENP-V/GFA domain in the interval 20–167 (FAGGTLVCKC…LKELGLEPYD (148 aa)). Zn(2+)-binding residues include cysteine 27, cysteine 29, cysteine 48, cysteine 50, cysteine 53, cysteine 95, and cysteine 98.

Belongs to the Gfa family. It depends on Zn(2+) as a cofactor.

The catalysed reaction is S-(hydroxymethyl)glutathione = glutathione + formaldehyde. It functions in the pathway one-carbon metabolism; formaldehyde degradation; formate from formaldehyde (glutathione route): step 1/3. In terms of biological role, catalyzes the condensation of formaldehyde and glutathione to S-hydroxymethylglutathione. This Rhodopseudomonas palustris (strain BisB18) protein is Glutathione-dependent formaldehyde-activating enzyme.